A 473-amino-acid chain; its full sequence is MKKGRVSQVLGPVVDVRFEDGHLPAIYNAIKVSQPATGENEVGIDLTLEVALHLGDDTVRTIAMASTDGIQRGMEAVDTGAPISVPVGDVTLGRVFNVLGDKIDLNEPLPADAQKDPIHRSAPSFDELSTEVEILETGIKVVDLLAPYIKGGKIGLFGGAGVGKTVLIQELINNIAQEHGGISVFAGVGERTREGNDLFYEMSDSGVIKKTAMVFGQMNEPPGARMRVALTGLTMAEHFRDKQGQDVLFFIDNIFRFTQAGSEVSALLGRMPSAVGYQPTLATEMGQLQERITSTNVGSVTSIQAIYVPADDYTDPAPATTFAHLDATTNLERKLTEMGIYPAVDPLASTSRALAPEIVGEEHYAVAREVQSTLQRYKELQDIIAILGMDELGEEDKLVVHRARRIQFFLSQNFHVAEQFTGQKGSYVPVKETVRGFKEILSGKYDHLPEDAFRLVGRIEEVIENAKEMGVEV.

Gly-158–Thr-165 contributes to the ATP binding site.

This sequence belongs to the ATPase alpha/beta chains family. As to quaternary structure, F-type ATPases have 2 components, CF(1) - the catalytic core - and CF(0) - the membrane proton channel. CF(1) has five subunits: alpha(3), beta(3), gamma(1), delta(1), epsilon(1). CF(0) has three main subunits: a(1), b(2) and c(9-12). The alpha and beta chains form an alternating ring which encloses part of the gamma chain. CF(1) is attached to CF(0) by a central stalk formed by the gamma and epsilon chains, while a peripheral stalk is formed by the delta and b chains.

Its subcellular location is the cell membrane. The catalysed reaction is ATP + H2O + 4 H(+)(in) = ADP + phosphate + 5 H(+)(out). Its function is as follows. Produces ATP from ADP in the presence of a proton gradient across the membrane. The catalytic sites are hosted primarily by the beta subunits. The polypeptide is ATP synthase subunit beta (Bacillus velezensis (strain DSM 23117 / BGSC 10A6 / LMG 26770 / FZB42) (Bacillus amyloliquefaciens subsp. plantarum)).